A 164-amino-acid polypeptide reads, in one-letter code: Phosphopantetheine adenylyltransferase (164 aa).

Ser-10 contributes to the substrate binding site. Residues 10–11 and His-18 each bind ATP; that span reads SF. Positions 42, 79, and 93 each coordinate substrate. Residues 94–96, Glu-104, and 129–135 each bind ATP; these read GLR and VRPIAAT.

Belongs to the bacterial CoaD family. In terms of assembly, homohexamer. It depends on Mg(2+) as a cofactor.

Its subcellular location is the cytoplasm. It carries out the reaction (R)-4'-phosphopantetheine + ATP + H(+) = 3'-dephospho-CoA + diphosphate. The protein operates within cofactor biosynthesis; coenzyme A biosynthesis; CoA from (R)-pantothenate: step 4/5. In terms of biological role, reversibly transfers an adenylyl group from ATP to 4'-phosphopantetheine, yielding dephospho-CoA (dPCoA) and pyrophosphate. This chain is Phosphopantetheine adenylyltransferase, found in Bradyrhizobium sp. (strain BTAi1 / ATCC BAA-1182).